The primary structure comprises 861 residues: Leucine--tRNA ligase (861 aa).

The short motif at 43-53 (PYPSGKLHMGH) is the 'HIGH' region element. Positions 588–592 (KMSKS) match the 'KMSKS' region motif. K591 contacts ATP.

It belongs to the class-I aminoacyl-tRNA synthetase family.

The protein localises to the cytoplasm. The catalysed reaction is tRNA(Leu) + L-leucine + ATP = L-leucyl-tRNA(Leu) + AMP + diphosphate. The polypeptide is Leucine--tRNA ligase (Symbiobacterium thermophilum (strain DSM 24528 / JCM 14929 / IAM 14863 / T)).